The sequence spans 285 residues: Dermonecrotic toxin LlSicTox-alphaIII2 (285 aa).

Histidine 12 is an active-site residue. 2 residues coordinate Mg(2+): glutamate 32 and aspartate 34. Histidine 47 acts as the Nucleophile in catalysis. A disulfide bond links cysteine 51 and cysteine 57. Mg(2+) is bound at residue aspartate 91.

Belongs to the arthropod phospholipase D family. Class I subfamily. The cofactor is Mg(2+). As to expression, expressed by the venom gland.

It localises to the secreted. The enzyme catalyses an N-(acyl)-sphingosylphosphocholine = an N-(acyl)-sphingosyl-1,3-cyclic phosphate + choline. The catalysed reaction is an N-(acyl)-sphingosylphosphoethanolamine = an N-(acyl)-sphingosyl-1,3-cyclic phosphate + ethanolamine. It catalyses the reaction a 1-acyl-sn-glycero-3-phosphocholine = a 1-acyl-sn-glycero-2,3-cyclic phosphate + choline. It carries out the reaction a 1-acyl-sn-glycero-3-phosphoethanolamine = a 1-acyl-sn-glycero-2,3-cyclic phosphate + ethanolamine. Its function is as follows. Dermonecrotic toxins cleave the phosphodiester linkage between the phosphate and headgroup of certain phospholipids (sphingolipid and lysolipid substrates), forming an alcohol (often choline) and a cyclic phosphate. This toxin acts on sphingomyelin (SM) (228.2 U/mg). It may also act on ceramide phosphoethanolamine (CPE), lysophosphatidylcholine (LPC) and lysophosphatidylethanolamine (LPE), but not on lysophosphatidylserine (LPS), and lysophosphatidylglycerol (LPG). It acts by transphosphatidylation, releasing exclusively cyclic phosphate products as second products. Induces dermonecrosis, hemolysis, increased vascular permeability, edema, inflammatory response, and platelet aggregation. Is lethal to mice. The sequence is that of Dermonecrotic toxin LlSicTox-alphaIII2 from Loxosceles laeta (South American recluse spider).